The chain runs to 311 residues: Homeobox protein CDX-2 (311 aa).

Ser60 bears the Phosphoserine mark. The interval 111-151 is disordered; that stretch reads EYHAHHHPHHHPHHPAASPSCASGLLQTLNLGPPGPAATAA. Positions 114–124 are enriched in basic residues; that stretch reads AHHHPHHHPHH. The tract at residues 185–215 is interaction with DNA; that stretch reads KDKYRVVYTDHQRLELEKEFHFSRYITIRRK. Positions 185-244 form a DNA-binding region, homeobox; sequence KDKYRVVYTDHQRLELEKEFHFSRYITIRRKSELAATLGLSERQVKIWFQNRRAKERKIK. The interval 227 to 241 is interaction with 5-mCpG DNA; that stretch reads RQVKIWFQNRRAKER. The disordered stretch occupies residues 239–311; the sequence is KERKIKKKQQ…GGVLNSTVTQ (73 aa). Low complexity predominate over residues 248-257; sequence QQQQQQQQQQ. Positions 258 to 268 are enriched in pro residues; sequence PPQPPPQPSQP. Ser281 carries the post-translational modification Phosphoserine; by CDK2. Positions 281–293 match the 4S motif; modulates transactivation activity and protein stability motif; that stretch reads SPVTSLQGSVPGS. The segment covering 285–298 has biased composition (low complexity); it reads SLQGSVPGSVPGVL.

This sequence belongs to the Caudal homeobox family. Can bind DNA as a monomer or homodimer. In terms of processing, ubiquitinated, leading to its degradation by the proteasome. Post-translationally, phosphorylation at Ser-60 reduces transactivation capacity. Phosphorylation at Ser-281 reduces transactivation capacity and increases ubiquitin-dependent proteasome degradation. In terms of tissue distribution, in the intestine, detected in ileum and proximal and distal colon (at protein level). In adult small intestine, predominantly localized in crypt and lower villus cells of the epithelium (at protein level). Expressed in the intestine but not detected in other tissues including stomach, liver, kidney, spleen, brain, heart, lung, pancreas, skeletal muscle and testis. Expressed specifically in gut epithelium where it is not restricted to a particular cell lineage. Abundant expression is seen in the proximal colon with slightly lower levels in distal colon. Expression in the proximal colon is not restricted either to a particular cell lineage or stage of differentiation while in the distal colon it is more abundant in the differentiated cells towards the top of the crypt.

The protein localises to the nucleus. Functionally, transcription factor which regulates the transcription of multiple genes expressed in the intestinal epithelium. Binds to the promoter of the intestinal sucrase-isomaltase SI and activates SI transcription. Binds to the DNA sequence 5'-ATAAAAACTTAT-3' in the promoter region of VDR and activates VDR transcription. Binds to and activates transcription of LPH. Activates transcription of CLDN2 and intestinal mucin MUC2. Binds to the 5'-AATTTTTTACAACACCT-3' DNA sequence in the promoter region of CA1 and activates CA1 transcription. Important in broad range of functions from early differentiation to maintenance of the intestinal epithelial lining of both the small and large intestine. Binds preferentially to methylated DNA. This chain is Homeobox protein CDX-2 (Cdx2), found in Mus musculus (Mouse).